The sequence spans 147 residues: Large ribosomal subunit protein uL13 (147 aa).

It belongs to the universal ribosomal protein uL13 family. Part of the 50S ribosomal subunit.

Its function is as follows. This protein is one of the early assembly proteins of the 50S ribosomal subunit, although it is not seen to bind rRNA by itself. It is important during the early stages of 50S assembly. The chain is Large ribosomal subunit protein uL13 from Deinococcus geothermalis (strain DSM 11300 / CIP 105573 / AG-3a).